The primary structure comprises 62 residues: Sperm protamine P1 (62 aa).

The segment at 1 to 62 (MARYRHSRSR…RYSRRRRRRY (62 aa)) is disordered.

Belongs to the protamine P1 family. As to expression, testis.

It localises to the nucleus. Its subcellular location is the chromosome. Its function is as follows. Protamines substitute for histones in the chromatin of sperm during the haploid phase of spermatogenesis. They compact sperm DNA into a highly condensed, stable and inactive complex. This chain is Sperm protamine P1 (PRM1), found in Lagostrophus fasciatus (Banded hare-wallaby).